The chain runs to 149 residues: Nucleoside diphosphate kinase 1 (149 aa).

The ATP site is built by Lys9, Phe57, Arg85, Thr91, Arg102, and Asn112. Catalysis depends on His115, which acts as the Pros-phosphohistidine intermediate.

Homohexamer. Mg(2+) is required as a cofactor.

The catalysed reaction is a 2'-deoxyribonucleoside 5'-diphosphate + ATP = a 2'-deoxyribonucleoside 5'-triphosphate + ADP. The enzyme catalyses a ribonucleoside 5'-diphosphate + ATP = a ribonucleoside 5'-triphosphate + ADP. Functionally, major role in the synthesis of nucleoside triphosphates other than ATP. The ATP gamma phosphate is transferred to the NDP beta phosphate via a ping-pong mechanism, using a phosphorylated active-site intermediate. This NDK is microtubule-associated. This Oryza sativa subsp. indica (Rice) protein is Nucleoside diphosphate kinase 1 (NDKR).